Here is a 336-residue protein sequence, read N- to C-terminus: Ribose-phosphate pyrophosphokinase 1 (336 aa).

Mg(2+)-binding residues include Asp-150, His-152, Asp-161, and Asp-165. The tract at residues 236–251 is binding of phosphoribosylpyrophosphate; sequence GKVAVMVDDMIDTAGT.

The protein belongs to the ribose-phosphate pyrophosphokinase family.

The enzyme catalyses D-ribose 5-phosphate + ATP = 5-phospho-alpha-D-ribose 1-diphosphate + AMP + H(+). This chain is Ribose-phosphate pyrophosphokinase 1 (PRS1), found in Spinacia oleracea (Spinach).